Here is a 221-residue protein sequence, read N- to C-terminus: Thiopurine S-methyltransferase (221 aa).

Residues W12, L47, E68, and R125 each contribute to the S-adenosyl-L-methionine site.

The protein belongs to the class I-like SAM-binding methyltransferase superfamily. TPMT family.

The protein localises to the cytoplasm. It catalyses the reaction S-adenosyl-L-methionine + a thiopurine = S-adenosyl-L-homocysteine + a thiopurine S-methylether.. The polypeptide is Thiopurine S-methyltransferase (Legionella pneumophila (strain Paris)).